A 410-amino-acid chain; its full sequence is Mating-type locus allele B7 protein (410 aa).

The variable domain between B alleles stretch occupies residues 1 to 110 (MSSDPNFSLT…VNVGSPAVGC (110 aa)). The segment at residues 107-184 (AVGCRNLSED…NARRRSGWSH (78 aa)) is a DNA-binding region (homeobox; TALE-type). The highly conserved between B alleles stretch occupies residues 111 to 410 (RNLSEDLPAY…PFLCLSVAFV (300 aa)). 3 disordered regions span residues 202–225 (RAKL…SNNL), 278–336 (TPKP…PELS), and 374–394 (ARGN…QPDE). A Nuclear localization signal motif is present at residues 276-308 (KKTPKPGMPRPVTTVAKRQPARKTKPAAKPNSR). Residues 306–336 (NSRTANPRASTTPSIDSTLDSSKLESTPELS) are compositionally biased toward polar residues. Positions 333 to 410 (PELSMCSTAD…PFLCLSVAFV (78 aa)) are not essential for B7 function. Positions 375–388 (RGNRKVKALPKRAG) are enriched in basic residues.

This sequence belongs to the TALE/M-ATYP homeobox family.

It localises to the nucleus. Functionally, the B locus has at least 25 alleles, and any combination of two different B alleles yields a multimeric regulatory protein, that activates genes responsible for the pathogenicity and for the sexual development of the fungus within the corn plant. The polypeptide is Mating-type locus allele B7 protein (Mycosarcoma maydis (Corn smut fungus)).